The sequence spans 87 residues: Acylphosphatase (87 aa).

Residues 1–87 (MAWVHGRVQG…EDYQDFRIRY (87 aa)) form the Acylphosphatase-like domain. Catalysis depends on residues Arg14 and Asn32.

The protein belongs to the acylphosphatase family.

The enzyme catalyses an acyl phosphate + H2O = a carboxylate + phosphate + H(+). This Cronobacter sakazakii (strain ATCC BAA-894) (Enterobacter sakazakii) protein is Acylphosphatase (acyP).